The following is a 391-amino-acid chain: 8-amino-7-oxononanoate synthase (391 aa).

Residue Arg-24 coordinates substrate. Pyridoxal 5'-phosphate is bound at residue 112 to 113 (GY). His-137 serves as a coordination point for substrate. Ser-183, His-211, and Thr-240 together coordinate pyridoxal 5'-phosphate. Lys-243 is subject to N6-(pyridoxal phosphate)lysine. Thr-357 is a substrate binding site.

The protein belongs to the class-II pyridoxal-phosphate-dependent aminotransferase family. BioF subfamily. Homodimer. Pyridoxal 5'-phosphate serves as cofactor.

It catalyses the reaction 6-carboxyhexanoyl-[ACP] + L-alanine + H(+) = (8S)-8-amino-7-oxononanoate + holo-[ACP] + CO2. It functions in the pathway cofactor biosynthesis; biotin biosynthesis. Its function is as follows. Catalyzes the decarboxylative condensation of pimeloyl-[acyl-carrier protein] and L-alanine to produce 8-amino-7-oxononanoate (AON), [acyl-carrier protein], and carbon dioxide. The sequence is that of 8-amino-7-oxononanoate synthase from Alkalilimnicola ehrlichii (strain ATCC BAA-1101 / DSM 17681 / MLHE-1).